The sequence spans 323 residues: tRNA-dihydrouridine synthase B (323 aa).

FMN contacts are provided by residues 16-18 (PMA) and glutamine 70. Cysteine 100 acts as the Proton donor in catalysis. FMN is bound by residues lysine 139, 200–202 (NGD), and 224–225 (GR).

The protein belongs to the Dus family. DusB subfamily. FMN is required as a cofactor.

It catalyses the reaction a 5,6-dihydrouridine in tRNA + NAD(+) = a uridine in tRNA + NADH + H(+). The catalysed reaction is a 5,6-dihydrouridine in tRNA + NADP(+) = a uridine in tRNA + NADPH + H(+). Its function is as follows. Catalyzes the synthesis of 5,6-dihydrouridine (D), a modified base found in the D-loop of most tRNAs, via the reduction of the C5-C6 double bond in target uridines. The protein is tRNA-dihydrouridine synthase B of Proteus vulgaris.